The following is a 269-amino-acid chain: Flagellar brake protein YcgR (269 aa).

The tract at residues 1–42 (MLREPMNQHDAPGPAETGADSDAETDAETDAETDAGAADDRY) is disordered. The span at 19–33 (ADSDAETDAETDAET) shows a compositional bias: acidic residues. One can recognise a PilZ domain in the interval 149 to 261 (QRRRHFRART…MENFLQRLVF (113 aa)).

It belongs to the YcgR family. As to quaternary structure, monomer. Interacts with the flagellar basal bodies.

It localises to the bacterial flagellum basal body. Acts as a flagellar brake, regulating swimming and swarming in a bis-(3'-5') cyclic diguanylic acid (c-di-GMP)-dependent manner. Binds 1 c-di-GMP dimer per subunit. Increasing levels of c-di-GMP lead to decreased motility. The chain is Flagellar brake protein YcgR from Cupriavidus taiwanensis (strain DSM 17343 / BCRC 17206 / CCUG 44338 / CIP 107171 / LMG 19424 / R1) (Ralstonia taiwanensis (strain LMG 19424)).